The primary structure comprises 454 residues: GA-binding protein alpha chain (454 aa).

The PNT domain occupies 168-251; sequence AALEGYRKEQ…SHLELLRKYV (84 aa). Residues 295 to 316 form a disordered region; that stretch reads KVQRSPRISGEDRSSPGNRTGN. Serine 303 carries the post-translational modification Phosphoserine. Residues 320-400 constitute a DNA-binding region (ETS); that stretch reads IQLWQFLLEL…QGKRFVYKFV (81 aa).

Belongs to the ETS family. In terms of assembly, heterotetramer of two alpha and two beta subunits. As to expression, ubiquitous.

The protein localises to the nucleus. Functionally, transcription factor capable of interacting with purine rich repeats (GA repeats). Positively regulates transcription of transcriptional repressor Rhit/Zpf13. This is GA-binding protein alpha chain (Gabpa) from Mus musculus (Mouse).